The sequence spans 1914 residues: Diacylglycerol kinase eta (1914 aa).

The segment covering 1 to 10 has biased composition (basic and acidic residues); sequence MSHLKLDTLH. The segment at 1 to 37 is disordered; it reads MSHLKLDTLHVQRSPRGSRRSSRSSGRSSACSSGSIS. The span at 23-37 shows a compositional bias: low complexity; it reads RSSGRSSACSSGSIS. Residues 82–175 enclose the PH domain; sequence AIIKEGFLLK…WLGSLKTATA (94 aa). 2 Phorbol-ester/DAG-type zinc fingers span residues 195–245 and 268–319; these read HHHW…IANC and PHQW…AVAC. One can recognise a DAGKc domain in the interval 350–486; the sequence is GNFSPLLVFV…DRWSIMVFEK (137 aa). Disordered regions lie at residues 621 to 642, 783 to 805, 1016 to 1053, 1116 to 1135, and 1175 to 1216; these read EKDQ…SEKE, GANI…NTPT, TLCS…PPRI, QHRG…TPTN, and PNTI…TVSL. Polar residues predominate over residues 1175 to 1187; it reads PNTILTTSTSPTK. The 64-residue stretch at 1851-1914 folds into the SAM domain; the sequence is WSVNEVVTWL…LQAIKDLSEN (64 aa).

This sequence belongs to the eukaryotic diacylglycerol kinase family.

The protein resides in the cytoplasm. It carries out the reaction a 1,2-diacyl-sn-glycerol + ATP = a 1,2-diacyl-sn-glycero-3-phosphate + ADP + H(+). In terms of biological role, phosphorylates diacylglycerol (DAG) to generate phosphatidic acid (PA). The protein is Diacylglycerol kinase eta of Drosophila sechellia (Fruit fly).